The primary structure comprises 539 residues: Eukaryotic translation initiation factor 3 subunit L (539 aa).

The PCI domain occupies 306 to 514 (TFSDILLYVQ…IHIADTKVSH (209 aa)).

The protein belongs to the eIF-3 subunit L family. In terms of assembly, component of the eukaryotic translation initiation factor 3 (eIF-3) complex. The eIF-3 complex interacts with pix.

Its subcellular location is the cytoplasm. In terms of biological role, component of the eukaryotic translation initiation factor 3 (eIF-3) complex, which is involved in protein synthesis of a specialized repertoire of mRNAs and, together with other initiation factors, stimulates binding of mRNA and methionyl-tRNAi to the 40S ribosome. The eIF-3 complex specifically targets and initiates translation of a subset of mRNAs involved in cell proliferation. The protein is Eukaryotic translation initiation factor 3 subunit L of Drosophila willistoni (Fruit fly).